The primary structure comprises 326 residues: Ig gamma-1 chain C region (326 aa).

Residues 1–97 (AETTAPSVYP…ASSTKVDKKI (97 aa)) form a CH1 region. A disulfide bond links C27 and C82. The interval 98 to 112 (VPRNCGGDCKPCICT) is hinge. Positions 113–219 (GSEVSSVFIF…PIEKTISKPE (107 aa)) are CH2. Cystine bridges form between C140–C200 and C246–C304. N-linked (GlcNAc...) asparagine glycosylation is present at N176. The interval 220-326 (GRTQVPHVYT…EKSLSHSPGK (107 aa)) is CH3.

This is Ig gamma-1 chain C region from Rattus norvegicus (Rat).